The chain runs to 218 residues: uncharacterized protein (218 aa).

2 consecutive transmembrane segments (helical) span residues 14–34 and 175–195; these read CLLSIITILLYWYLRFVYFTS and LIIPIPFGTIKIIVGSPLALV.

To H.pylori HP0270.

The protein resides in the cell membrane. This is an uncharacterized protein from Rickettsia prowazekii (strain Madrid E).